The primary structure comprises 92 residues: Small ribosomal subunit protein uS19 (92 aa).

The segment at 73 to 92 (EFSPTRSFRGHAGAKNKGKK) is disordered. The segment covering 80–92 (FRGHAGAKNKGKK) has biased composition (basic residues).

Belongs to the universal ribosomal protein uS19 family.

In terms of biological role, protein S19 forms a complex with S13 that binds strongly to the 16S ribosomal RNA. This is Small ribosomal subunit protein uS19 from Flavobacterium psychrophilum (strain ATCC 49511 / DSM 21280 / CIP 103535 / JIP02/86).